Reading from the N-terminus, the 270-residue chain is 3-methyl-2-oxobutanoate hydroxymethyltransferase (270 aa).

Mg(2+) is bound by residues Asp50 and Asp89. 3-methyl-2-oxobutanoate-binding positions include 50–51, Asp89, and Lys118; that span reads DS. Residue Glu120 participates in Mg(2+) binding. Catalysis depends on Glu187, which acts as the Proton acceptor.

It belongs to the PanB family. Homodecamer; pentamer of dimers. Mg(2+) serves as cofactor.

Its subcellular location is the cytoplasm. It catalyses the reaction 3-methyl-2-oxobutanoate + (6R)-5,10-methylene-5,6,7,8-tetrahydrofolate + H2O = 2-dehydropantoate + (6S)-5,6,7,8-tetrahydrofolate. The protein operates within cofactor biosynthesis; (R)-pantothenate biosynthesis; (R)-pantoate from 3-methyl-2-oxobutanoate: step 1/2. Catalyzes the reversible reaction in which hydroxymethyl group from 5,10-methylenetetrahydrofolate is transferred onto alpha-ketoisovalerate to form ketopantoate. This Helicobacter pylori (strain G27) protein is 3-methyl-2-oxobutanoate hydroxymethyltransferase.